We begin with the raw amino-acid sequence, 450 residues long: METLSFDSSALKKFVHPNELGEMQAMVTAADSELRNGTGAGADFRDWLHLPTDYDKDEFARIEAAAKKIQADSEVLVVIGIGGSYLGARMAVDFLHHSFYQAQTAADRKQPLVLFAGNSLSSSYIADLIDVIGDRDFSVNVISKSGTTTEPSIAFRVFRQLLEDKYGVDGANARIYATTDRQRGALKTEADAEGWGTFVIPDGVGGRFSVLTAVGLLPIAVSGADIDQLMAGAAKAEATYVNPDLTQNEAYQYAAYRNILYRKGYTTELLENYEPNMTMLAEWWKQLAGESEGKDQKGIYPSSANFTTDLHSLGQYIQEGRRNLMETVVKLAEPNHNVKVPSAKSDFDGLKYLEGKEIDWVNTQAYRAVVAAHTTGGVPVMTVNIAKEDEFTLGYLIYFFEVAIAISGYLNGINPFNQPGVEAYKTNMFGLLGKPGFEEIGEQLKKEMDD.

E290 acts as the Proton donor in catalysis. Catalysis depends on residues H311 and K425.

The protein belongs to the GPI family.

The protein localises to the cytoplasm. It catalyses the reaction alpha-D-glucose 6-phosphate = beta-D-fructose 6-phosphate. The protein operates within carbohydrate biosynthesis; gluconeogenesis. It functions in the pathway carbohydrate degradation; glycolysis; D-glyceraldehyde 3-phosphate and glycerone phosphate from D-glucose: step 2/4. Catalyzes the reversible isomerization of glucose-6-phosphate to fructose-6-phosphate. This Limosilactobacillus fermentum (Lactobacillus fermentum) protein is Glucose-6-phosphate isomerase.